The sequence spans 479 residues: Ribulose bisphosphate carboxylase large chain (479 aa).

A propeptide spanning residues 1–2 is cleaved from the precursor; the sequence is MS. Asparagine 123 and threonine 173 together coordinate substrate. Lysine 175 serves as the catalytic Proton acceptor. Residue lysine 177 participates in substrate binding. 3 residues coordinate Mg(2+): lysine 201, aspartate 203, and glutamate 204. N6-carboxylysine is present on lysine 201. A Phosphoserine modification is found at serine 208. Catalysis depends on histidine 294, which acts as the Proton acceptor. Arginine 295 and histidine 327 together coordinate substrate. Threonine 330 is modified (phosphothreonine). Serine 379 contacts substrate.

The protein belongs to the RuBisCO large chain family. Type I subfamily. In terms of assembly, heterohexadecamer of 8 large chains and 8 small chains; disulfide-linked. The disulfide link is formed within the large subunit homodimers. Mg(2+) serves as cofactor. The disulfide bond which can form in the large chain dimeric partners within the hexadecamer appears to be associated with oxidative stress and protein turnover.

The protein localises to the plastid. Its subcellular location is the chloroplast. It catalyses the reaction 2 (2R)-3-phosphoglycerate + 2 H(+) = D-ribulose 1,5-bisphosphate + CO2 + H2O. The enzyme catalyses D-ribulose 1,5-bisphosphate + O2 = 2-phosphoglycolate + (2R)-3-phosphoglycerate + 2 H(+). Its function is as follows. RuBisCO catalyzes two reactions: the carboxylation of D-ribulose 1,5-bisphosphate, the primary event in carbon dioxide fixation, as well as the oxidative fragmentation of the pentose substrate in the photorespiration process. Both reactions occur simultaneously and in competition at the same active site. The sequence is that of Ribulose bisphosphate carboxylase large chain from Arabis hirsuta (Hairy rock-cress).